The chain runs to 737 residues: tRNA (guanine(27)-N(2))-dimethyltransferase (737 aa).

A compositionally biased stretch (acidic residues) spans 1–10 (MENMAEEELL). The segment at 1–65 (MENMAEEELL…ASAPVPAPAL (65 aa)) is disordered. A compositionally biased stretch (low complexity) spans 17-49 (VVQVPVPTPTPDSARVPAPAPDSAPVSASTPAP). Threonine 24 bears the Phosphothreonine mark. Over residues 50-62 (ASAPTPASAPVPA) the composition is skewed to pro residues. Serine 72 is modified (phosphoserine). Positions 141-145 (HKLHR) match the Nucleolar localization signal motif. Residues 190-212 (YHCIICSATITRRTDMLGHVRRH) form a C2H2-type zinc finger. Residues 233–692 (EILKEADTDV…APLMQFKSIL (460 aa)) enclose the Trm1 methyltransferase domain. The S-adenosyl-L-methionine site is built by arginine 266, aspartate 313, aspartate 363, and alanine 364. Zn(2+)-binding residues include cysteine 494, cysteine 497, cysteine 519, and cysteine 521. A Glycyl lysine isopeptide (Lys-Gly) (interchain with G-Cter in SUMO2) cross-link involves residue lysine 589. Serine 616 carries the post-translational modification Phosphoserine.

The protein belongs to the class I-like SAM-binding methyltransferase superfamily. Trm1 family.

Its subcellular location is the nucleus. It is found in the nucleolus. The catalysed reaction is guanosine(27) in tRNA(Tyr) + 2 S-adenosyl-L-methionine = N(2)-dimethylguanosine(27) in tRNA(Tyr) + 2 S-adenosyl-L-homocysteine + 2 H(+). In terms of biological role, specifically dimethylates a single guanine residue at position 27 of tRNA(Tyr) using S-adenosyl-L-methionine as donor of the methyl groups. Dimethylation at position 27 of tRNA(Tyr) is required for efficient translation of tyrosine codons. Also required to maintain 3-(3-amino-3-carboxypropyl)uridine (acp3U) in the D-loop of several cytoplasmic tRNAs. The sequence is that of tRNA (guanine(27)-N(2))-dimethyltransferase (TRMT1L) from Bos taurus (Bovine).